The chain runs to 369 residues: MNNSYYVGLMSGTSMDGVDAVLVNFDGDQPSLIATHTEALPKALLSNLQKLCLPGNDEINRLGHLDRAMGKLFAKATNALLEKAGVDKSQVIAIGSHGQTVRHMPNLEMGFTLQIADPNTIAAETGIDVIADFRRKDIALGGQGAPLVPAFHQHVFANPNHQRIILNIGGIANVTYLPGNTQDVTGFDTGPGNGLSDAWIQHQLGQPFDKDGAWAASGTTDQKMLQHLLSHPYFALAAPKSTGRELFNQAWAEQQLSEFGHLSEADIQSTLLDLTCYSIANDALTLSDNGEMYVCGGGAYNCELMHRLRKLLPDYKVVTTSELGMDPQWVEGIAFAWLAMRHHNGLPGNLPAVTGASREAILGSFHPAD.

Residue 12–19 (GTSMDGVD) coordinates ATP.

It belongs to the anhydro-N-acetylmuramic acid kinase family.

The catalysed reaction is 1,6-anhydro-N-acetyl-beta-muramate + ATP + H2O = N-acetyl-D-muramate 6-phosphate + ADP + H(+). Its pathway is amino-sugar metabolism; 1,6-anhydro-N-acetylmuramate degradation. The protein operates within cell wall biogenesis; peptidoglycan recycling. Catalyzes the specific phosphorylation of 1,6-anhydro-N-acetylmuramic acid (anhMurNAc) with the simultaneous cleavage of the 1,6-anhydro ring, generating MurNAc-6-P. Is required for the utilization of anhMurNAc either imported from the medium or derived from its own cell wall murein, and thus plays a role in cell wall recycling. The protein is Anhydro-N-acetylmuramic acid kinase of Shewanella halifaxensis (strain HAW-EB4).